The primary structure comprises 506 residues: Maturase K (506 aa).

Belongs to the intron maturase 2 family. MatK subfamily.

It is found in the plastid. The protein resides in the chloroplast. Functionally, usually encoded in the trnK tRNA gene intron. Probably assists in splicing its own and other chloroplast group II introns. The protein is Maturase K of Uncarina grandidieri (Mouse trap tree).